A 136-amino-acid polypeptide reads, in one-letter code: uncharacterized protein (136 aa).

The protein belongs to the mimivirus L163/R849 family.

This is an uncharacterized protein from Acanthamoeba polyphaga mimivirus (APMV).